The primary structure comprises 170 residues: MQIAIIAAGCFWGVQEVYLRKFIPAAAILKTSVGYTGGITADPTYKEVCTNTTNHAEALKIEFDEKLTSYDKIIEFFFAMHDPTTSNQQGNDIGTQYRSAIFTTNPEQATIAKRVMNEVQAKHYPNKKIVTQILPAGKWWDAEDYHQLYLEKNPDGYRCSSHFLRWNVFE.

Belongs to the MsrA Met sulfoxide reductase family.

Its subcellular location is the cytoplasm. The protein resides in the nucleus. The catalysed reaction is L-methionyl-[protein] + [thioredoxin]-disulfide + H2O = L-methionyl-(S)-S-oxide-[protein] + [thioredoxin]-dithiol. It carries out the reaction [thioredoxin]-disulfide + L-methionine + H2O = L-methionine (S)-S-oxide + [thioredoxin]-dithiol. Has an important function as a repair enzyme for proteins that have been inactivated by oxidation. Catalyzes the reversible oxidation-reduction of methionine sulfoxide in proteins to methionine. The chain is Probable peptide methionine sulfoxide reductase (mxr1) from Schizosaccharomyces pombe (strain 972 / ATCC 24843) (Fission yeast).